We begin with the raw amino-acid sequence, 120 residues long: ATP-dependent Clp protease adapter protein ClpS (120 aa).

It belongs to the ClpS family. Binds to the N-terminal domain of the chaperone ClpA.

Functionally, involved in the modulation of the specificity of the ClpAP-mediated ATP-dependent protein degradation. The sequence is that of ATP-dependent Clp protease adapter protein ClpS from Pseudomonas syringae pv. tomato (strain ATCC BAA-871 / DC3000).